A 135-amino-acid chain; its full sequence is Protein NrdI (135 aa).

It belongs to the NrdI family.

Its function is as follows. Probably involved in ribonucleotide reductase function. In Brucella abortus (strain S19), this protein is Protein NrdI.